The sequence spans 605 residues: Adaptin medium chain homolog APM2 (605 aa).

Residues 150–196 form a disordered region; that stretch reads EEWSPGEESSSSSGSDSDSEYSNTNKRKDKKKKRKKKKGTKGKSVGK. The span at 155 to 171 shows a compositional bias: low complexity; that stretch reads GEESSSSSGSDSDSEYS. The segment covering 174–196 has biased composition (basic residues); the sequence is NKRKDKKKKRKKKKGTKGKSVGK. The region spanning 269-604 is the MHD domain; that stretch reads KNEFFLDVIE…TVSDEEYAYI (336 aa).

It belongs to the adaptor complexes medium subunit family. Component of the AP-1R complex composed of at least APM2, APL4 and APS1. Interacts with MIL1. Interacts with APL2.

Its subcellular location is the golgi apparatus membrane. The protein localises to the early endosome membrane. It localises to the cytoplasmic vesicle. The protein resides in the clathrin-coated vesicle membrane. Functionally, component of the AP-1-related (AP-1R) complex, an adapter protein complex that mediates of cargo protein sorting in clathrin-coated vesicles. AP-1R has a specific role in SNARE SNC1 sorting. In contrast to the APM1-containing AP-1 complex, AP-1R is incapable of sorting CHS3. The polypeptide is Adaptin medium chain homolog APM2 (APM2) (Saccharomyces cerevisiae (strain ATCC 204508 / S288c) (Baker's yeast)).